The sequence spans 158 residues: NAD(P)H-quinone oxidoreductase subunit J, chloroplastic (158 aa).

It belongs to the complex I 30 kDa subunit family. NDH is composed of at least 16 different subunits, 5 of which are encoded in the nucleus.

The protein localises to the plastid. It localises to the chloroplast thylakoid membrane. The catalysed reaction is a plastoquinone + NADH + (n+1) H(+)(in) = a plastoquinol + NAD(+) + n H(+)(out). It catalyses the reaction a plastoquinone + NADPH + (n+1) H(+)(in) = a plastoquinol + NADP(+) + n H(+)(out). NDH shuttles electrons from NAD(P)H:plastoquinone, via FMN and iron-sulfur (Fe-S) centers, to quinones in the photosynthetic chain and possibly in a chloroplast respiratory chain. The immediate electron acceptor for the enzyme in this species is believed to be plastoquinone. Couples the redox reaction to proton translocation, and thus conserves the redox energy in a proton gradient. The protein is NAD(P)H-quinone oxidoreductase subunit J, chloroplastic of Oenothera argillicola (Appalachian evening primrose).